Here is an 83-residue protein sequence, read N- to C-terminus: Cytochrome b559 subunit alpha (83 aa).

The helical transmembrane segment at 21–35 (VIHSITIPSLFIAGW) threads the bilayer. His23 lines the heme pocket.

The protein belongs to the PsbE/PsbF family. In terms of assembly, heterodimer of an alpha subunit and a beta subunit. PSII is composed of 1 copy each of membrane proteins PsbA, PsbB, PsbC, PsbD, PsbE, PsbF, PsbH, PsbI, PsbJ, PsbK, PsbL, PsbM, PsbT, PsbX, PsbY, PsbZ, Psb30/Ycf12, at least 3 peripheral proteins of the oxygen-evolving complex and a large number of cofactors. It forms dimeric complexes. Heme b is required as a cofactor.

Its subcellular location is the plastid. It localises to the chloroplast thylakoid membrane. Its function is as follows. This b-type cytochrome is tightly associated with the reaction center of photosystem II (PSII). PSII is a light-driven water:plastoquinone oxidoreductase that uses light energy to abstract electrons from H(2)O, generating O(2) and a proton gradient subsequently used for ATP formation. It consists of a core antenna complex that captures photons, and an electron transfer chain that converts photonic excitation into a charge separation. The protein is Cytochrome b559 subunit alpha of Daucus carota (Wild carrot).